Consider the following 830-residue polypeptide: Lon protease 3 (830 aa).

In terms of domain architecture, Lon N-terminal spans 19-213; sequence VPLLPLRDII…RLIELMQAEI (195 aa). 367–374 lines the ATP pocket; that stretch reads GPPGVGKT. A Lon proteolytic domain is found at 604–784; the sequence is RDEVGLVNGL…DDVLREALIL (181 aa). Active-site residues include S690 and K733. Low complexity predominate over residues 811–823; sequence PVKAPPAAAGEPT. Residues 811-830 form a disordered region; sequence PVKAPPAAAGEPTPAAPPGA.

This sequence belongs to the peptidase S16 family. In terms of assembly, homohexamer. Organized in a ring with a central cavity.

The protein localises to the cytoplasm. The catalysed reaction is Hydrolysis of proteins in presence of ATP.. Its function is as follows. ATP-dependent serine protease that mediates the selective degradation of mutant and abnormal proteins as well as certain short-lived regulatory proteins. Required for cellular homeostasis and for survival from DNA damage and developmental changes induced by stress. Degrades polypeptides processively to yield small peptide fragments that are 5 to 10 amino acids long. Binds to DNA in a double-stranded, site-specific manner. This chain is Lon protease 3, found in Sorangium cellulosum (strain So ce56) (Polyangium cellulosum (strain So ce56)).